An 85-amino-acid polypeptide reads, in one-letter code: Putative membrane protein insertion efficiency factor (85 aa).

Belongs to the UPF0161 family.

It is found in the cell inner membrane. Could be involved in insertion of integral membrane proteins into the membrane. In Enterobacter sp. (strain 638), this protein is Putative membrane protein insertion efficiency factor.